A 201-amino-acid polypeptide reads, in one-letter code: Large ribosomal subunit protein uL4 (201 aa).

The disordered stretch occupies residues 45 to 71 (AQKTRAEVTGSGKKPWRQKGTGRARAG).

The protein belongs to the universal ribosomal protein uL4 family. Part of the 50S ribosomal subunit.

In terms of biological role, one of the primary rRNA binding proteins, this protein initially binds near the 5'-end of the 23S rRNA. It is important during the early stages of 50S assembly. It makes multiple contacts with different domains of the 23S rRNA in the assembled 50S subunit and ribosome. Forms part of the polypeptide exit tunnel. The chain is Large ribosomal subunit protein uL4 from Shewanella loihica (strain ATCC BAA-1088 / PV-4).